The primary structure comprises 530 residues: uncharacterized protein (530 aa).

5 helical membrane-spanning segments follow: residues 4 to 23 (FLAA…GLAI), 28 to 47 (LFGV…VVST), 57 to 79 (FVFQ…PAFF), 91 to 113 (LFMI…AFGL), and 148 to 170 (VIGY…AVGA). The RCK C-terminal domain occupies 260–344 (LGGECDTKIE…MGEVRRFLGD (85 aa)). The next 4 membrane-spanning stretches (helical) occupy residues 352–374 (VNLL…PVPL), 379–398 (TMYL…LGAL), 419–441 (LGLA…QALT), and 451–473 (VGFA…LLKL).

It belongs to the AAE transporter (TC 2.A.81) family.

The protein localises to the cell membrane. This is an uncharacterized protein from Corynebacterium efficiens (strain DSM 44549 / YS-314 / AJ 12310 / JCM 11189 / NBRC 100395).